A 118-amino-acid polypeptide reads, in one-letter code: DNA-directed RNA polymerase subunit omega (118 aa).

This sequence belongs to the RNA polymerase subunit omega family. In terms of assembly, the RNAP catalytic core consists of 2 alpha, 1 beta, 1 beta' and 1 omega subunit. When a sigma factor is associated with the core the holoenzyme is formed, which can initiate transcription.

The enzyme catalyses RNA(n) + a ribonucleoside 5'-triphosphate = RNA(n+1) + diphosphate. Promotes RNA polymerase assembly. Latches the N- and C-terminal regions of the beta' subunit thereby facilitating its interaction with the beta and alpha subunits. The polypeptide is DNA-directed RNA polymerase subunit omega (Paracoccus denitrificans (strain Pd 1222)).